We begin with the raw amino-acid sequence, 34 residues long: Photosystem II reaction center protein M (34 aa).

A helical transmembrane segment spans residues 5 to 25 (ILAFIATALFILVPTAFLLII).

Belongs to the PsbM family. PSII is composed of 1 copy each of membrane proteins PsbA, PsbB, PsbC, PsbD, PsbE, PsbF, PsbH, PsbI, PsbJ, PsbK, PsbL, PsbM, PsbT, PsbX, PsbY, PsbZ, Psb30/Ycf12, at least 3 peripheral proteins of the oxygen-evolving complex and a large number of cofactors. It forms dimeric complexes.

Its subcellular location is the plastid. The protein resides in the chloroplast thylakoid membrane. In terms of biological role, one of the components of the core complex of photosystem II (PSII). PSII is a light-driven water:plastoquinone oxidoreductase that uses light energy to abstract electrons from H(2)O, generating O(2) and a proton gradient subsequently used for ATP formation. It consists of a core antenna complex that captures photons, and an electron transfer chain that converts photonic excitation into a charge separation. This subunit is found at the monomer-monomer interface. In Coffea arabica (Arabian coffee), this protein is Photosystem II reaction center protein M.